Here is a 602-residue protein sequence, read N- to C-terminus: Transcription factor COE4 (602 aa).

An interaction with DNA region spans residues 64–67; the sequence is RKSN. The segment at 152–171 adopts a C5-type zinc-finger fold; the sequence is CRVLLTHEIMCSRCCDRKSC. 2 interaction with DNA regions span residues 198–205 and 237–240; these read NCLKNAGN and NNSK. Residues 256 to 338 enclose the IPT/TIG domain; sequence PCIKAISPGE…CKGCPGRFVY (83 aa). Disordered regions lie at residues 448-476 and 558-602; these read PEPG…SGYG and PVLR…LAYS. A compositionally biased stretch (pro residues) spans 560–569; the sequence is LRPPSSPPQA.

It belongs to the COE family. In terms of assembly, forms either a homodimer or a heterodimer with a related family member. Interacts with MAPK3/ERK1. Interacts with STAT5A. As to expression, most highly expressed in cytotoxic NK cells, especially CD16(+) NK cells, followed by CD8(+) T-cells.

Its subcellular location is the nucleus. In terms of biological role, transcription factor. Binds to specific sequence motif 5'-CCCNNG[GA]G-3' in regulatory elements of putative target immunoregulatory genes such as NKG7, GZMA, and TBX21. Positively modulates transcription of NKG7. May play a role in regulating FAS/CD95-mediated apoptosis in cytotoxic NK cells and T-cells, probably downstream of interleukin IL2 signaling. In Homo sapiens (Human), this protein is Transcription factor COE4 (EBF4).